Consider the following 295-residue polypeptide: Acetylglutamate kinase (295 aa).

Residues 61–62 (GG), arginine 83, and asparagine 182 each bind substrate.

This sequence belongs to the acetylglutamate kinase family. ArgB subfamily.

It is found in the cytoplasm. It carries out the reaction N-acetyl-L-glutamate + ATP = N-acetyl-L-glutamyl 5-phosphate + ADP. The protein operates within amino-acid biosynthesis; L-arginine biosynthesis; N(2)-acetyl-L-ornithine from L-glutamate: step 2/4. Functionally, catalyzes the ATP-dependent phosphorylation of N-acetyl-L-glutamate. The sequence is that of Acetylglutamate kinase from Clostridium acetobutylicum (strain ATCC 824 / DSM 792 / JCM 1419 / IAM 19013 / LMG 5710 / NBRC 13948 / NRRL B-527 / VKM B-1787 / 2291 / W).